The following is a 334-amino-acid chain: HTH-type transcriptional repressor PurR (334 aa).

In terms of domain architecture, HTH lacI-type spans Ala-2 to Val-56. The H-T-H motif DNA-binding region spans Ile-4–Asn-23. Residues Ser-48–Val-56 mediate DNA binding. 5 residues coordinate hypoxanthine: Tyr-73, Lys-189, Thr-191, Phe-220, and Asp-274.

Homodimer.

The protein operates within purine metabolism; purine nucleotide biosynthesis [regulation]. In terms of biological role, is the main repressor of the genes involved in the de novo synthesis of purine nucleotides, regulating purB, purC, purEK, purF, purHD, purL, purMN and guaBA expression. PurR is allosterically activated to bind its cognate DNA by binding the purine corepressors, hypoxanthine or guanine, thereby effecting transcription repression. In Mannheimia succiniciproducens (strain KCTC 0769BP / MBEL55E), this protein is HTH-type transcriptional repressor PurR.